Consider the following 492-residue polypeptide: Catalase isozyme B (492 aa).

The segment at methionine 1–asparagine 20 is disordered. Residues serine 9–asparagine 20 show a composition bias toward polar residues. Arginine 62 is a heme binding site. Residue histidine 65 is part of the active site. A heme-binding site is contributed by arginine 102. Asparagine 138 is an active-site residue. Phenylalanine 151 contributes to the heme binding site. Tyrosine 210 is subject to Phosphotyrosine. The segment at residues cysteine 325–tyrosine 348 is a cross-link (3-(S-cysteinyl)-tyrosine (Cys-Tyr)). Heme is bound by residues arginine 344, tyrosine 348, and arginine 355. The Peroxisome targeting signal motif lies at serine 484 to methionine 492.

This sequence belongs to the catalase family. In terms of assembly, homotetramer. Interacts with GLO1 and GLO4; these interactions are disturbed by alpha-hydroxy-2-pyridinemethanesulfonic acid (HPMS) and salicylic acid (SA). Interacts with STRK1 at the plasma membrane. Requires heme as cofactor. Predominantly expressed in roots and, at low levels, in leaves (e.g. sheaths). Detected in seeds. Also present in panicles and culms. Observed in stems and anthers.

It is found in the peroxisome. The protein localises to the glyoxysome. It localises to the cell membrane. The enzyme catalyses 2 H2O2 = O2 + 2 H2O. Strongly inhibited by beta-mercaptoethanol, sodium azide and potassium cyanide. Slightly repressed by 3-amino-1,2,4-triazole (3-AT). Activity is repressed proportionally to increased concentration of NaCl, KCl, LiCl and MgCl(2). Occurs in almost all aerobically respiring organisms and serves to protect cells from the toxic effects of hydrogen peroxide. May prevent the excessive accumulation of H(2)O(2) during water stress in response to the accumulation of abscisic acid (ABA). Involved in the modulation of ROS levels related to root growth regulation. Required for pollen viability and floret fertility upon heat stress (HS) by detoxifying reactive oxygen species (ROS) and malondialdehyde (MDA) accumulation in developing anthers exposed to HS. This Oryza sativa subsp. japonica (Rice) protein is Catalase isozyme B (CATB).